Reading from the N-terminus, the 275-residue chain is Ciliary microtubule inner protein 2B (275 aa).

Disordered stretches follow at residues 62–84 (PPIR…RGQE) and 125–169 (EKQG…SPYS). Basic and acidic residues-rich tracts occupy residues 71 to 84 (EVPR…RGQE) and 125 to 147 (EKQG…KDQV).

The protein belongs to the CIMIP2 family. Microtubule inner protein component of sperm flagellar doublet microtubules. In terms of tissue distribution, expressed in airway epithelial cells.

The protein resides in the cytoplasm. It is found in the cytoskeleton. It localises to the cilium axoneme. Its subcellular location is the flagellum axoneme. In terms of biological role, microtubule inner protein (MIP) part of the dynein-decorated doublet microtubules (DMTs) in cilia axoneme, which is required for motile cilia beating. The chain is Ciliary microtubule inner protein 2B from Homo sapiens (Human).